The following is a 369-amino-acid chain: Flagellar P-ring protein 1 (369 aa).

An N-terminal signal peptide occupies residues 1–23; the sequence is MRKQSLVTLLMVLLSLVWLPASA.

This sequence belongs to the FlgI family. In terms of assembly, the basal body constitutes a major portion of the flagellar organelle and consists of four rings (L,P,S, and M) mounted on a central rod.

It localises to the periplasm. The protein resides in the bacterial flagellum basal body. In terms of biological role, assembles around the rod to form the L-ring and probably protects the motor/basal body from shearing forces during rotation. In Yersinia pseudotuberculosis serotype I (strain IP32953), this protein is Flagellar P-ring protein 1.